A 274-amino-acid chain; its full sequence is Coagulation factor IX (274 aa).

Y23 is subject to Sulfotyrosine. N-linked (GlcNAc...) asparagine glycosylation occurs at N25. Position 26 is a phosphoserine (S26). N35 carries an N-linked (GlcNAc...) asparagine glycan. T37 carries an O-linked (GalNAc...) threonine glycan. N40 carries N-linked (GlcNAc...) asparagine glycosylation. One can recognise a Peptidase S1 domain in the interval 49–274 (VVGGEDAARG…IYTKVSRYEV (226 aa)). C74 and C90 form a disulfide bridge. H89 functions as the Charge relay system in the catalytic mechanism. 4 residues coordinate Ca(2+): E103, N105, E110, and E113. N128 carries N-linked (GlcNAc...) asparagine glycosylation. The Charge relay system role is filled by D137. 2 disulfides stabilise this stretch: C204/C218 and C229/C257. S233 serves as the catalytic Charge relay system.

This sequence belongs to the peptidase S1 family. In terms of assembly, heterodimer of a light chain and a heavy chain; disulfide-linked. Interacts (inactive and activated) with F11 (activated) in calcium-dependent manner. Interacts with SERPINC1. In terms of processing, activated by factor XIa, which excises the activation peptide. The propeptide can also be removed by snake venom protease. Activated by coagulation factor VIIa-tissue factor (F7-F3) complex in calcium-dependent manner.

It is found in the secreted. It carries out the reaction Selective cleavage of Arg-|-Ile bond in factor X to form factor Xa.. Functionally, factor IX is a vitamin K-dependent plasma protein that participates in the intrinsic pathway of blood coagulation by converting factor X to its active form in the presence of Ca(2+) ions, phospholipids, and factor VIIIa. The chain is Coagulation factor IX (F9) from Ovis aries (Sheep).